A 1064-amino-acid polypeptide reads, in one-letter code: Bifunctional cytochrome P450/NADPH--P450 reductase ascE (1064 aa).

Residues Met-1 to Lys-484 are cytochrome P450. Cys-411 lines the heme pocket. The interval Ile-485–Ala-1064 is NADPH-P-450 reductase. A Flavodoxin-like domain is found at Met-504 to Leu-644. Residues Ser-510 to Thr-514 and Val-588 to Ala-620 contribute to the FMN site. Positions Val-676–Pro-905 constitute an FAD-binding FR-type domain.

It in the N-terminal section; belongs to the cytochrome P450 family. FAD serves as cofactor. The cofactor is FMN. Requires heme as cofactor.

The enzyme catalyses ilicicolin A + NADPH + O2 + H(+) = ilicicolin A epoxide + NADP(+) + H2O. Its pathway is secondary metabolite biosynthesis; terpenoid biosynthesis. Bifunctional cytochrome P450/NADPH--P450 reductase; part of the asc-1 gene cluster that mediates the biosynthesis both ascochlorin and ascofuranone, a strong inhibitor of cyanide-insensitive alternative oxidases and a promising drug candidate against African trypanosomiasis. The first step in the pathway is performed by the non-reducing polyketide synthase ascC that produces orsellinic acid by condensing acetyl-CoA with 3 malonyl-CoA units. Orsellinic acid is then prenylated by the prenyltransferase ascA to yield ilicicolinic acid B. Ilicicolinic acid B is further reduced to ilicicolin B by the reductase ascB. The halogenase ascD then chlorinates ilicicolin B to produce ilicicolin A which is converted to ilicicolin A epoxide by the cytochrome P450 monooxygenase ascE that catalyzes stereoselective epoxidation of the terminal double bond of the prenyl group. Ilicicolin A epoxide is the last common precursor for the biosynthesis of ascofuranone and ascochlorin. The terpene cyclase ascF produces a monocyclic terpene, and the cyclization reaction is proposed to be initiated by protonation of the terminal epoxide of ilicicolin A epoxide to generate a monocyclic tertiarycation, which is followed by a series of hydride and methyl shifts with abstraction of proton, leading to the formation of the (14S,15R,19R)-trimethylcyclohexanone ring structure of ilicicolin C, which is finally reduced to ascochlorin by the dehydrogenase ascG. On the other hand, ilicicolin A epoxide is hydroxylated by the cytochrome P450 monooxygenase ascH, and the resultant product is cyclized by the terpene cyclase ascI to ascofuranol via protonation-initiated epoxide ring opening, which facilitates the 6-endo-tet cyclization to form the tetrahy-drofuran ring. Finally, ascofuranol is oxidized into ascofuranone by ascJ. This is Bifunctional cytochrome P450/NADPH--P450 reductase ascE from Acremonium egyptiacum (Oospora egyptiaca).